A 388-amino-acid chain; its full sequence is F-box protein At4g00893 (388 aa).

The segment at 1 to 30 is disordered; that stretch reads MLPSPSVHMASPPPSLNMASHPPSPATASR. One can recognise an F-box domain in the interval 42–88; the sequence is NPSFADLPSSLIEEIMLLLVLKDNIRASAACKSWYEAGVSVRVVDKH.

The protein is F-box protein At4g00893 of Arabidopsis thaliana (Mouse-ear cress).